Here is a 456-residue protein sequence, read N- to C-terminus: Proline-specific permease ProY (456 aa).

Residues 1-17 (MESNNKLKRGLSTRHIR) lie on the Cytoplasmic side of the membrane. 2 helical membrane passes run 18–38 (FMAL…DAIK) and 39–59 (MAGP…YIIM). The Cytoplasmic portion of the chain corresponds to 60–95 (RALGEMSVHNPAASSFSRYAQENLGPLAGYITGWTY). The next 2 membrane-spanning stretches (helical) occupy residues 96–116 (CFEI…YMGV) and 117–137 (WFPA…ICAI). The Cytoplasmic segment spans residues 138–156 (NLMSVKVFGELEFWFSFFK). Residues 157 to 177 (VATIIIMIVAGIGIIVWGIGN) form a helical membrane-spanning segment. Residues 178-197 (GGQPTGIHNLWSNGGFFSNG) lie on the Periplasmic side of the membrane. A helical transmembrane segment spans residues 198 to 218 (WLGMIMSLQMVMFAYGGIEII). At 219 to 242 (GITAGEAKDPEKSIPRAINSVPMR) the chain is on the cytoplasmic side. A helical transmembrane segment spans residues 243–263 (ILVFYVGTLFVIMSIYPWNQV). Residues 264-277 (GTNGSPFVLTFQHM) are Periplasmic-facing. Residues 278-298 (GITFAASILNFVVLTASLSAI) form a helical membrane-spanning segment. The Cytoplasmic segment spans residues 299–331 (NSDVFGVGRMLHGMAEQGSAPKVFAKTSRRGIP). The helical transmembrane segment at 332–352 (WVTVLVMTIALLFAVYLNYIM) threads the bilayer. The Periplasmic segment spans residues 353–355 (PEN). Residues 356 to 376 (VFLVIASLATFATVWVWIMIL) form a helical membrane-spanning segment. Residues 377 to 399 (LSQIAFRRRLPPEEVKALKFKVP) lie on the Cytoplasmic side of the membrane. A helical transmembrane segment spans residues 400-420 (GGVVTTIAGLIFLVFIIALIG). Topologically, residues 421–424 (YHPD) are periplasmic. The chain crosses the membrane as a helical span at residues 425–445 (TRISLYVGFAWIVLLLIGWIF). Residues 446–456 (KRRRDRQLAQA) lie on the Cytoplasmic side of the membrane.

The protein belongs to the amino acid-polyamine-organocation (APC) superfamily. Amino acid transporter (AAT) (TC 2.A.3.1) family.

It is found in the cell inner membrane. Functionally, permease that is involved in the transport across the cytoplasmic membrane of proline. This Salmonella typhimurium (strain LT2 / SGSC1412 / ATCC 700720) protein is Proline-specific permease ProY (proY).